The following is a 522-amino-acid chain: Cytochrome P450 4e5, mitochondrial (522 aa).

Residues Glu307 and Cys443 each contribute to the heme site.

The protein belongs to the cytochrome P450 family. The cofactor is heme.

Its subcellular location is the mitochondrion. Functionally, probably involved in steroid hormones biosynthesis. In Drosophila mettleri (Fruit fly), this protein is Cytochrome P450 4e5, mitochondrial (Cyp4e5).